We begin with the raw amino-acid sequence, 313 residues long: Oxaloacetate tautomerase Fahd2a, mitochondrial (313 aa).

A mitochondrion-targeting transit peptide spans 1–84 (MLGSGRRRLL…TALSVARRAL (84 aa)). Mg(2+)-binding residues include glutamate 159, glutamate 161, and aspartate 190. N6-acetyllysine; alternate is present on lysine 202. Lysine 202 carries the N6-succinyllysine; alternate modification. An N6-acetyllysine modification is found at lysine 233.

This sequence belongs to the FAH family. Requires Mg(2+) as cofactor. Mn(2+) serves as cofactor.

Its subcellular location is the mitochondrion. The enzyme catalyses oxaloacetate = enol-oxaloacetate. Its function is as follows. Tautomerase that converts enol-oxaloacetate, a strong inhibitor of succinate dehydrogenase, to the physiological keto form of oxaloacetate. It is thereby required to maximize aerobic respiration efficiency by preventing succinate dehydrogenase inhibition. This is Oxaloacetate tautomerase Fahd2a, mitochondrial from Rattus norvegicus (Rat).